The following is an 86-amino-acid chain: Small ribosomal subunit protein uS15c (86 aa).

This sequence belongs to the universal ribosomal protein uS15 family. In terms of assembly, part of the 30S ribosomal subunit.

It is found in the plastid. This Cuscuta gronovii (Common dodder) protein is Small ribosomal subunit protein uS15c (rps15).